We begin with the raw amino-acid sequence, 211 residues long: Uracil phosphoribosyltransferase (211 aa).

5-phospho-alpha-D-ribose 1-diphosphate-binding positions include Arg-81, Arg-106, and 133 to 141 (DPMLATGNS). Uracil contacts are provided by residues Ile-196 and 201–203 (GDA). A 5-phospho-alpha-D-ribose 1-diphosphate-binding site is contributed by Asp-202.

This sequence belongs to the UPRTase family. The cofactor is Mg(2+).

It carries out the reaction UMP + diphosphate = 5-phospho-alpha-D-ribose 1-diphosphate + uracil. Its pathway is pyrimidine metabolism; UMP biosynthesis via salvage pathway; UMP from uracil: step 1/1. Allosterically activated by GTP. Catalyzes the conversion of uracil and 5-phospho-alpha-D-ribose 1-diphosphate (PRPP) to UMP and diphosphate. The protein is Uracil phosphoribosyltransferase of Myxococcus xanthus (strain DK1622).